A 252-amino-acid polypeptide reads, in one-letter code: 3-dehydroquinate dehydratase (252 aa).

3-dehydroquinate-binding positions include Ser-21, 46 to 48 (EWR), and Arg-82. Residue His-143 is the Proton donor/acceptor of the active site. Lys-170 serves as the catalytic Schiff-base intermediate with substrate. Positions 213, 232, and 236 each coordinate 3-dehydroquinate.

This sequence belongs to the type-I 3-dehydroquinase family. Homodimer.

It catalyses the reaction 3-dehydroquinate = 3-dehydroshikimate + H2O. It functions in the pathway metabolic intermediate biosynthesis; chorismate biosynthesis; chorismate from D-erythrose 4-phosphate and phosphoenolpyruvate: step 3/7. Involved in the third step of the chorismate pathway, which leads to the biosynthesis of aromatic amino acids. Catalyzes the cis-dehydration of 3-dehydroquinate (DHQ) and introduces the first double bond of the aromatic ring to yield 3-dehydroshikimate. The chain is 3-dehydroquinate dehydratase from Escherichia coli O157:H7.